The sequence spans 93 residues: Acylphosphatase (93 aa).

The Acylphosphatase-like domain maps to 5 to 93; that stretch reads AKQIVVRGRV…PNFRGFQVTG (89 aa). Residues arginine 20 and asparagine 38 contribute to the active site.

This sequence belongs to the acylphosphatase family.

It carries out the reaction an acyl phosphate + H2O = a carboxylate + phosphate + H(+). The polypeptide is Acylphosphatase (acyP) (Lacticaseibacillus paracasei (strain ATCC 334 / BCRC 17002 / CCUG 31169 / CIP 107868 / KCTC 3260 / NRRL B-441) (Lactobacillus paracasei)).